A 733-amino-acid polypeptide reads, in one-letter code: Folic acid synthesis protein fol1 (733 aa).

DHNA regions lie at residues 55 to 167 (VVVE…YAER) and 179 to 277 (IEFS…QIYR). Position 281 is a phosphotyrosine (Tyr-281). Residues 295 to 454 (NKIAYLSFGS…LPSQGIRLYS (160 aa)) form an HPK region. The Pterin-binding domain occupies 465–724 (ALTMGILNVT…DTKEMSKVVG (260 aa)). The DHPS stretch occupies residues 467–733 (TMGILNVTPD…GMANAIRYVP (267 aa)). Asn-472 is a binding site for Mg(2+). (7,8-dihydropterin-6-yl)methyl diphosphate-binding positions include Thr-511, Asp-546, Asn-565, Asp-637, Lys-677, and 712–714 (RVH).

In the N-terminal section; belongs to the DHNA family. It in the central section; belongs to the HPPK family. The protein in the C-terminal section; belongs to the DHPS family. Mg(2+) serves as cofactor.

It is found in the cytoplasm. It catalyses the reaction 7,8-dihydroneopterin = 6-hydroxymethyl-7,8-dihydropterin + glycolaldehyde. The enzyme catalyses 6-hydroxymethyl-7,8-dihydropterin + ATP = (7,8-dihydropterin-6-yl)methyl diphosphate + AMP + H(+). The catalysed reaction is (7,8-dihydropterin-6-yl)methyl diphosphate + 4-aminobenzoate = 7,8-dihydropteroate + diphosphate. The protein operates within cofactor biosynthesis; tetrahydrofolate biosynthesis; 2-amino-4-hydroxy-6-hydroxymethyl-7,8-dihydropteridine diphosphate from 7,8-dihydroneopterin triphosphate: step 3/4. It participates in cofactor biosynthesis; tetrahydrofolate biosynthesis; 2-amino-4-hydroxy-6-hydroxymethyl-7,8-dihydropteridine diphosphate from 7,8-dihydroneopterin triphosphate: step 4/4. Its pathway is cofactor biosynthesis; tetrahydrofolate biosynthesis; 7,8-dihydrofolate from 2-amino-4-hydroxy-6-hydroxymethyl-7,8-dihydropteridine diphosphate and 4-aminobenzoate: step 1/2. Its function is as follows. Catalyzes three sequential steps of tetrahydrofolate biosynthesis. This is Folic acid synthesis protein fol1 (fol1) from Schizosaccharomyces pombe (strain 972 / ATCC 24843) (Fission yeast).